A 377-amino-acid chain; its full sequence is ATP synthase gamma chain, chloroplastic (377 aa).

The transit peptide at 1–55 (MSCSNLTMLVSSKPSLSDSSALSFRSSVSPFQLPNHNTSGPSNPSRSSSVTPVHC) directs the protein to the chloroplast. A disordered region spans residues 30 to 52 (PFQLPNHNTSGPSNPSRSSSVTP). A compositionally biased stretch (low complexity) spans 37–52 (NTSGPSNPSRSSSVTP). Cys-143 is a catalytic residue. Cys-253 and Cys-259 are joined by a disulfide.

Belongs to the ATPase gamma chain family. F-type ATPases have 2 components, CF(1) - the catalytic core - and CF(0) - the membrane proton channel. CF(1) has five subunits: alpha(3), beta(3), gamma(1), delta(1), epsilon(1). CF(0) has four main subunits: a, b, b' and c.

It is found in the plastid. The protein resides in the chloroplast thylakoid membrane. Its function is as follows. Produces ATP from ADP in the presence of a proton gradient across the membrane. The gamma chain is believed to be important in regulating ATPase activity and the flow of protons through the CF(0) complex. This is ATP synthase gamma chain, chloroplastic (ATPC) from Nicotiana tabacum (Common tobacco).